An 873-amino-acid chain; its full sequence is Aminopeptidase M1-D (873 aa).

Residues 96 to 203 (LGEGVLAMRF…MSTYLVAIVV (108 aa)) form a required for membrane association region. Substrate-binding positions include Glu136 and 269 to 273 (GAMEN). A Zn(2+)-binding site is contributed by His305. The active-site Proton acceptor is the Glu306. His309 and Glu328 together coordinate Zn(2+). Positions 721–722 (LL) match the Dileucine internalization motif motif.

Belongs to the peptidase M1 family. In terms of assembly, homodimer. The cofactor is Zn(2+).

It localises to the membrane. Its subcellular location is the microsome membrane. The protein localises to the cytoplasm. The enzyme catalyses Release of an N-terminal amino acid, Xaa-|-Yaa- from a peptide, amide or arylamide. Xaa is preferably Ala, but may be most amino acids including Pro (slow action). When a terminal hydrophobic residue is followed by a prolyl residue, the two may be released as an intact Xaa-Pro dipeptide.. The polypeptide is Aminopeptidase M1-D (Oryza sativa subsp. japonica (Rice)).